Reading from the N-terminus, the 214-residue chain is Nucleoplasmin-2 (214 aa).

The segment at 119-214 (ERYEASDLTW…ARAKKPGFKK (96 aa)) is disordered. The segment covering 127 to 155 (TWEEEEEEEGEEEEEEEEDDEDEDADISL) has biased composition (acidic residues). Residues 129–152 (EEEEEEEGEEEEEEEEDDEDEDAD) are acidic tract A2. The short motif at 165–180 (KRLVPQKQASVAKKKK) is the Bipartite nuclear localization signal element. The span at 181–197 (LEKEEEEIRASVRDKSP) shows a compositional bias: basic and acidic residues. Residues 198–214 (VKKAKATARAKKPGFKK) are compositionally biased toward basic residues.

This sequence belongs to the nucleoplasmin family. In terms of assembly, homopentamer, when bound to H2A-H2B dimers only. Homodecamer of two stacked pentamers, when bound to H2A-H2B dimers and H3-H4 tetramers simultaneously.

The protein localises to the nucleus. Its function is as follows. Core histones chaperone involved in chromatin reprogramming, specially during fertilization and early embryonic development. Probably involved in sperm DNA decondensation during fertilization. This is Nucleoplasmin-2 (NPM2) from Homo sapiens (Human).